A 513-amino-acid polypeptide reads, in one-letter code: Protein disulfide-isomerase (513 aa).

An N-terminal signal peptide occupies residues 1 to 23 (MAIRSKAWISLLLALAVALSARA). Residues 24-145 (EEEPAAAAEG…IVDYLKKQVG (122 aa)) enclose the Thioredoxin 1 domain. Catalysis depends on nucleophile residues C63 and C66. A disulfide bond links C63 and C66. N-linked (GlcNAc...) asparagine glycosylation occurs at N279. The Thioredoxin 2 domain occupies 366–485 (FRNSEPIPEV…IVDFIKKSKE (120 aa)). Active-site nucleophile residues include C408 and C411. C408 and C411 are joined by a disulfide. The segment at 485-513 (ETAAPHHHHHPGATGIREGSRAEPVKDEL) is disordered. A compositionally biased stretch (basic and acidic residues) spans 502 to 513 (EGSRAEPVKDEL). Residues 510–513 (KDEL) carry the Prevents secretion from ER motif.

Belongs to the protein disulfide isomerase family.

The protein resides in the endoplasmic reticulum lumen. The enzyme catalyses Catalyzes the rearrangement of -S-S- bonds in proteins.. Participates in the folding of proteins containing disulfide bonds, may be involved in glycosylation, prolyl hydroxylation and triglyceride transfer. The chain is Protein disulfide-isomerase (PDI) from Zea mays (Maize).